A 386-amino-acid polypeptide reads, in one-letter code: F420 non-reducing hydrogenase I small subunit (386 aa).

A signal peptide (tat-type signal) is located at residues methionine 1–alanine 51. The [4Fe-4S] cluster site is built by cysteine 67, cysteine 70, cysteine 178, cysteine 227, histidine 273, cysteine 276, cysteine 296, and cysteine 302. [3Fe-4S] cluster is bound by residues cysteine 311, cysteine 330, and cysteine 333.

It belongs to the [NiFe]/[NiFeSe] hydrogenase small subunit family. Composed of a large subunit (VhoA), a small subunit (VhoG) and a cytochrome subunit (VhoC). The cofactor is [4Fe-4S] cluster. [3Fe-4S] cluster is required as a cofactor. Predicted to be exported by the Tat system. The position of the signal peptide cleavage has not been experimentally proven.

Its subcellular location is the cell membrane. The enzyme catalyses methanophenazine + H2 = dihydromethanophenazine. Part of the F420 non-reducing hydrogenase I complex that catalyzes the reduction of methanophenazine to dihydromethanophenazine. The sequence is that of F420 non-reducing hydrogenase I small subunit from Methanosarcina mazei (strain ATCC BAA-159 / DSM 3647 / Goe1 / Go1 / JCM 11833 / OCM 88) (Methanosarcina frisia).